The sequence spans 336 residues: Inositol 2-dehydrogenase (336 aa).

The protein belongs to the Gfo/Idh/MocA family. In terms of assembly, homotetramer.

The enzyme catalyses myo-inositol + NAD(+) = scyllo-inosose + NADH + H(+). In terms of biological role, involved in the oxidation of myo-inositol (MI) to 2-keto-myo-inositol (2KMI or 2-inosose). This is Inositol 2-dehydrogenase from Salmonella agona (strain SL483).